We begin with the raw amino-acid sequence, 158 residues long: NADH-quinone oxidoreductase subunit B 2 (158 aa).

[4Fe-4S] cluster-binding residues include cysteine 37, cysteine 38, cysteine 102, and cysteine 132.

Belongs to the complex I 20 kDa subunit family. As to quaternary structure, NDH-1 is composed of 14 different subunits. Subunits NuoB, C, D, E, F, and G constitute the peripheral sector of the complex. The cofactor is [4Fe-4S] cluster.

It localises to the cell inner membrane. It carries out the reaction a quinone + NADH + 5 H(+)(in) = a quinol + NAD(+) + 4 H(+)(out). Functionally, NDH-1 shuttles electrons from NADH, via FMN and iron-sulfur (Fe-S) centers, to quinones in the respiratory chain. Couples the redox reaction to proton translocation (for every two electrons transferred, four hydrogen ions are translocated across the cytoplasmic membrane), and thus conserves the redox energy in a proton gradient. This chain is NADH-quinone oxidoreductase subunit B 2, found in Nitrosospira multiformis (strain ATCC 25196 / NCIMB 11849 / C 71).